The following is an 83-amino-acid chain: Small ribosomal subunit protein bS16 (83 aa).

The protein belongs to the bacterial ribosomal protein bS16 family.

In Pseudomonas fluorescens (strain Pf0-1), this protein is Small ribosomal subunit protein bS16.